The following is a 94-amino-acid chain: Progonadoliberin-1 (94 aa).

A signal peptide spans 1 to 22 (MAAKILALWLLLAGTVFPQGCC). Glutamine 23 carries the pyrrolidone carboxylic acid modification. A Glycine amide modification is found at glycine 32.

Belongs to the GnRH family. Synthesized in preoptic neurons and is transported to the pituitary in the preoptic-hypophyseal axons.

The protein localises to the secreted. Functionally, stimulates the secretion of gonadotropins. May be responsible for the regulation of the hypothalamic-pituitary-gonadal axis. This chain is Progonadoliberin-1 (gnrh1), found in Haplochromis burtoni (Burton's mouthbrooder).